The sequence spans 719 residues: Glycine--tRNA ligase beta subunit (719 aa).

The disordered stretch occupies residues 65-84 (PDREEEIKGPPAKAAFKDGK).

It belongs to the class-II aminoacyl-tRNA synthetase family. In terms of assembly, tetramer of two alpha and two beta subunits.

The protein localises to the cytoplasm. It catalyses the reaction tRNA(Gly) + glycine + ATP = glycyl-tRNA(Gly) + AMP + diphosphate. This chain is Glycine--tRNA ligase beta subunit, found in Trichodesmium erythraeum (strain IMS101).